A 473-amino-acid polypeptide reads, in one-letter code: ATP synthase subunit beta (473 aa).

Residue 153-160 (GGAGVGKT) participates in ATP binding.

This sequence belongs to the ATPase alpha/beta chains family. F-type ATPases have 2 components, CF(1) - the catalytic core - and CF(0) - the membrane proton channel. CF(1) has five subunits: alpha(3), beta(3), gamma(1), delta(1), epsilon(1). CF(0) has three main subunits: a(1), b(2) and c(9-12). The alpha and beta chains form an alternating ring which encloses part of the gamma chain. CF(1) is attached to CF(0) by a central stalk formed by the gamma and epsilon chains, while a peripheral stalk is formed by the delta and b chains.

The protein localises to the cell inner membrane. The enzyme catalyses ATP + H2O + 4 H(+)(in) = ADP + phosphate + 5 H(+)(out). In terms of biological role, produces ATP from ADP in the presence of a proton gradient across the membrane. The catalytic sites are hosted primarily by the beta subunits. The polypeptide is ATP synthase subunit beta (Rickettsia massiliae (strain Mtu5)).